Here is a 114-residue protein sequence, read N- to C-terminus: Iron-sulfur cluster insertion protein ErpA (114 aa).

Iron-sulfur cluster-binding residues include C42, C106, and C108.

This sequence belongs to the HesB/IscA family. Homodimer. Requires iron-sulfur cluster as cofactor.

Required for insertion of 4Fe-4S clusters for at least IspG. The protein is Iron-sulfur cluster insertion protein ErpA of Haemophilus ducreyi (strain 35000HP / ATCC 700724).